A 396-amino-acid chain; its full sequence is S-adenosylmethionine synthase 4 (396 aa).

E13 is a binding site for Mg(2+). H19 provides a ligand contact to ATP. E47 is a binding site for K(+). Residues E60 and Q103 each contribute to the L-methionine site. Residues 171 to 173, 239 to 242, D250, 256 to 257, A273, K277, and K281 each bind ATP; these read DGK, SGRF, and RK. D250 contributes to the L-methionine binding site. Residue K281 coordinates L-methionine.

This sequence belongs to the AdoMet synthase family. As to quaternary structure, homotetramer. The cofactor is Mn(2+). Mg(2+) serves as cofactor. Co(2+) is required as a cofactor. Requires K(+) as cofactor. As to expression, expressed in roots, stems and leaves (at protein level).

The protein resides in the cytoplasm. The enzyme catalyses L-methionine + ATP + H2O = S-adenosyl-L-methionine + phosphate + diphosphate. Its pathway is amino-acid biosynthesis; S-adenosyl-L-methionine biosynthesis; S-adenosyl-L-methionine from L-methionine: step 1/1. In terms of biological role, catalyzes the formation of S-adenosylmethionine from methionine and ATP. The reaction comprises two steps that are both catalyzed by the same enzyme: formation of S-adenosylmethionine (AdoMet) and triphosphate, and subsequent hydrolysis of the triphosphate. May be involved in the synthesis of betain in response to abiotic stress such as high salinity. This Atriplex nummularia (Old man saltbush) protein is S-adenosylmethionine synthase 4 (SAMS4).